The chain runs to 346 residues: Biotin synthase (346 aa).

Residues 38–256 (RQVQVSTLLS…IAVARIMMPT (219 aa)) enclose the Radical SAM core domain. Residues C53, C57, and C60 each coordinate [4Fe-4S] cluster. [2Fe-2S] cluster contacts are provided by C97, C128, C188, and R260.

This sequence belongs to the radical SAM superfamily. Biotin synthase family. As to quaternary structure, homodimer. Requires [4Fe-4S] cluster as cofactor. The cofactor is [2Fe-2S] cluster.

It catalyses the reaction (4R,5S)-dethiobiotin + (sulfur carrier)-SH + 2 reduced [2Fe-2S]-[ferredoxin] + 2 S-adenosyl-L-methionine = (sulfur carrier)-H + biotin + 2 5'-deoxyadenosine + 2 L-methionine + 2 oxidized [2Fe-2S]-[ferredoxin]. The protein operates within cofactor biosynthesis; biotin biosynthesis; biotin from 7,8-diaminononanoate: step 2/2. Its function is as follows. Catalyzes the conversion of dethiobiotin (DTB) to biotin by the insertion of a sulfur atom into dethiobiotin via a radical-based mechanism. This chain is Biotin synthase, found in Shigella dysenteriae serotype 1 (strain Sd197).